The sequence spans 354 residues: Histidinol-phosphate aminotransferase (354 aa).

Lysine 215 is modified (N6-(pyridoxal phosphate)lysine).

This sequence belongs to the class-II pyridoxal-phosphate-dependent aminotransferase family. Histidinol-phosphate aminotransferase subfamily. In terms of assembly, homodimer. Pyridoxal 5'-phosphate is required as a cofactor.

It catalyses the reaction L-histidinol phosphate + 2-oxoglutarate = 3-(imidazol-4-yl)-2-oxopropyl phosphate + L-glutamate. The protein operates within amino-acid biosynthesis; L-histidine biosynthesis; L-histidine from 5-phospho-alpha-D-ribose 1-diphosphate: step 7/9. In Vesicomyosocius okutanii subsp. Calyptogena okutanii (strain HA), this protein is Histidinol-phosphate aminotransferase.